A 404-amino-acid chain; its full sequence is CD2 homolog (404 aa).

Positions 1–16 (MFITLIFLSYINIVLS) are cleaved as a signal peptide. Over 17–225 (NNYWARLNET…QNYFLENIHT (209 aa)) the chain is Extracellular. N-linked (GlcNAc...) asparagine; by host glycosylation is found at N24, N87, N92, N96, N122, N139, N167, N193, N200, and N206. Cystine bridges form between C140–C207 and C147–C190. Residues 226–246 (LFYIIIFIVSGLIASIFISII) traverse the membrane as a helical segment. Topologically, residues 247-404 (TFLSLRKRKK…ISLIHVDRII (158 aa)) are cytoplasmic. The tract at residues 260-295 (EIESPPPESNEEEQCQHDDTTSIHEPSPREPLLPKP) is disordered. Basic and acidic residues predominate over residues 273–287 (QCQHDDTTSIHEPSP). 7 tandem repeats follow at residues 322 to 327 (NPCPPP), 328 to 333 (KPCPPP), 334 to 339 (KPCPPP), 340 to 345 (KPCPPP), 346 to 351 (KPCPPP), 352 to 357 (KPCPPP), and 358 to 363 (KPCPPP). Positions 322-363 (NPCPPPKPCPPPKPCPPPKPCPPPKPCPPPKPCPPPKPCPPP) are 7 X 6 AA tandem repeats of [KN]-P-C-P-P-P. Pro residues predominate over residues 357 to 388 (PKPCPPPKPCSSPESYSPPKPLPSIPLLPNIP). Positions 357 to 390 (PKPCPPPKPCSSPESYSPPKPLPSIPLLPNIPPL) are disordered.

The protein belongs to the asfivirus CD2 homolog protein family. Both glycosylated and nonglycosylated forms interact (via C-terminus) with the host AP-1 complex. Post-translationally, cleaved into two fragments of 63 kDa and 26 kDa containing respectively the glycosylated N-terminus and the nonglycosylated C-terminus. A full-length 89-kDa glycosylated form also exists.

It localises to the host membrane. Its subcellular location is the virion membrane. The protein resides in the host Golgi apparatus. Functionally, may play an immunosuppressive role by inhibiting lymphocyte proliferation and subsequently facilitating viral replication and generalization of infection. Responsible for viral hemadsorption, which may help viral spread. Increases virus replication in the tick vector at the step of virus uptake or replication in the tick gut. May play a role in the host Golgi reorganization to yield viral factories. May play a role in host cell penetration. This is CD2 homolog from African swine fever virus (isolate Tick/South Africa/Pretoriuskop Pr4/1996) (ASFV).